A 245-amino-acid polypeptide reads, in one-letter code: Fibroblast growth factor 13 (245 aa).

A disordered region spans residues Met-1–Thr-36. The mediates targeting to the nucleus stretch occupies residues Met-1–Pro-62. Residues Lys-67–Val-201 are mediates interaction with sodium channels. Residue Ser-208 is modified to Phosphoserine. The tract at residues Thr-213–Thr-245 is disordered. Residues Phe-215–Thr-245 are compositionally biased toward polar residues.

It belongs to the heparin-binding growth factors family. In terms of assembly, interacts with SCN8A; regulates SCN8A activity. Interacts with SCN1A; may regulate SCN1A activity. Interacts with SCN5A; the interaction is direct and may regulate SNC5A density at membranes and function. May also interact with SCN2A and SCN11A. Interacts with MAPK8IP2; may regulate the MAPK8IP2 scaffolding activity. In terms of processing, may be phosphorylated. Ubiquitously expressed. Predominantly expressed in the nervous system.

It localises to the nucleus. The protein localises to the cytoplasm. Its subcellular location is the cell projection. The protein resides in the filopodium. It is found in the growth cone. It localises to the dendrite. The protein localises to the cell membrane. Its subcellular location is the sarcolemma. In terms of biological role, microtubule-binding protein which directly binds tubulin and is involved in both polymerization and stabilization of microtubules. Through its action on microtubules, may participate in the refinement of axons by negatively regulating axonal and leading processes branching. Plays a crucial role in neuron polarization and migration in the cerebral cortex and the hippocampus. Regulates voltage-gated sodium channel transport and function. May also play a role in MAPK signaling. Required for the development of axonal initial segment-targeting inhibitory GABAergic synapses made by chandelier neurons. This is Fibroblast growth factor 13 from Homo sapiens (Human).